We begin with the raw amino-acid sequence, 336 residues long: HTH-type transcriptional regulator CdhR (336 aa).

The HTH araC/xylS-type domain occupies 213 to 311 (VQVIGEMERH…AASPSQDRAV (99 aa)). DNA-binding regions (H-T-H motif) lie at residues 230 to 251 (LELAERIQVTRRQLERLFRVHL) and 278 to 301 (VLQVSLACGFESPSYFSRSYRARF). The segment at 305–336 (PSQDRAVLPLKAPAATPPGAPAGHRTPRAERG) is disordered.

Functionally, induces the transcription of the PA5384-PA5388 operon in response to carnitine. This operon is involved in the degradation of L-carnitine, and allows P.aeruginosa to grow on L-carnitine as the sole source of carbon and nitrogen. The polypeptide is HTH-type transcriptional regulator CdhR (cdhR) (Pseudomonas aeruginosa (strain ATCC 15692 / DSM 22644 / CIP 104116 / JCM 14847 / LMG 12228 / 1C / PRS 101 / PAO1)).